A 192-amino-acid polypeptide reads, in one-letter code: Ion-translocating oxidoreductase complex subunit B (192 aa).

The tract at residues 1–26 is hydrophobic; the sequence is MSAVWIAVIAISLLGLIFGLILGYAS. The 4Fe-4S domain maps to 32-91; it reads QDDPVVEKIDELLPQSQCGQCGYPGCRPYAEAVGAQGEKINRCAPGGEAVMLKIAALLNV. [4Fe-4S] cluster-binding residues include Cys49, Cys52, Cys57, Cys74, Cys117, Cys120, Cys123, Cys127, Cys147, Cys150, Cys153, and Cys157. 4Fe-4S ferredoxin-type domains follow at residues 108–137 and 138–167; these read MLAVIDEPNCIGCTKCIQACPVDAIVGATR and AMHTVMNDLCTGCNLCVAPCPTQCISLVPV.

The protein belongs to the 4Fe4S bacterial-type ferredoxin family. RnfB subfamily. The complex is composed of six subunits: RnfA, RnfB, RnfC, RnfD, RnfE and RnfG. Requires [4Fe-4S] cluster as cofactor.

It localises to the cell inner membrane. Part of a membrane-bound complex that couples electron transfer with translocation of ions across the membrane. The protein is Ion-translocating oxidoreductase complex subunit B of Klebsiella pneumoniae (strain 342).